We begin with the raw amino-acid sequence, 267 residues long: Kallikrein-14 (267 aa).

The signal sequence occupies residues 1 to 34 (MSLRVLGSGTWPSAPKMFLLLTALQVLAIAMTQS). The propeptide at 35 to 40 (QEDENK) is activation peptide. Positions 41 to 265 (IIGGHTCTRS…YRSWIEETMR (225 aa)) constitute a Peptidase S1 domain. 5 disulfides stabilise this stretch: cysteine 47/cysteine 180, cysteine 68/cysteine 84, cysteine 159/cysteine 226, cysteine 191/cysteine 205, and cysteine 216/cysteine 241. Active-site charge relay system residues include histidine 83 and aspartate 127. Serine 220 serves as the catalytic Charge relay system.

It belongs to the peptidase S1 family. Kallikrein subfamily. In terms of processing, proteolytic cleavage of the activation peptide produces the active enzyme. As to expression, highly expressed in CNS, bone marrow and fetal liver. Also expressed in breast, thyroid, kidney, colon, pancreas, spleen, prostate, uterus, small intestine, placenta and skeletal muscle. Among 40 tissues tested, the highest expression is detected in skin followed by breast and prostate (at protein level). Expressed in stratum corneum by sweat ducts and sweat glands and detected in sweat (at protein level).

It localises to the secreted. The protein localises to the extracellular space. With respect to regulation, inhibited by SERPINA1, SERPINC1, SERPINE1, SERPINF2, aprotinin, soybean, trypsin inhibitor and leupeptin. Inhibited by serine protease inhibitor SPINK5. Has an autoproteolytic activity which may have a regulatory effect. Activated by citrate and inhibited by zinc and to a lower extent by manganese. Serine-type endopeptidase with a dual trypsin-like and chymotrypsin-like substrate specificity. May activate/inactivate the proteinase-activated receptors F2R, F2RL1 and F2RL3 and other kallikreins including KLK1, KLK3, KLK5 and KLK11. May function in seminal clot liquefaction through direct cleavage of the semenogelin SEMG1 and SEMG2 and activation of KLK3. May function through desmoglein DSG1 cleavage in epidermal desquamation a process by which the most superficial corneocytes are shed from the skin surface. May be involved in several aspects of tumor progression including growth, invasion and angiogenesis. This Homo sapiens (Human) protein is Kallikrein-14 (KLK14).